Consider the following 173-residue polypeptide: Glutamyl-tRNA(Gln) amidotransferase subunit C-1, mitochondrial (173 aa).

A mitochondrion-targeting transit peptide spans 1 to 23; it reads MIRIPFRLRPPPGRTLHSLVRTF. The disordered stretch occupies residues 51-70; it reads PSKVPQRPHKSTTTVGQSTP. A compositionally biased stretch (polar residues) spans 61-70; the sequence is STTTVGQSTP.

It belongs to the GatC family. Subunit of the heterotrimeric GatCAB amidotransferase (AdT) complex, composed of A, B and C subunits.

It is found in the mitochondrion. The enzyme catalyses L-glutamyl-tRNA(Gln) + L-glutamine + ATP + H2O = L-glutaminyl-tRNA(Gln) + L-glutamate + ADP + phosphate + H(+). In terms of biological role, allows the formation of correctly charged Gln-tRNA(Gln) through the transamidation of misacylated Glu-tRNA(Gln) in the mitochondria. The reaction takes place in the presence of glutamine and ATP through an activated gamma-phospho-Glu-tRNA(Gln). This is Glutamyl-tRNA(Gln) amidotransferase subunit C-1, mitochondrial from Culex quinquefasciatus (Southern house mosquito).